Here is a 511-residue protein sequence, read N- to C-terminus: MKLVYWMYAGPAHIGTLRVASSFKNVHAIMHAPLGDDYFNVMRSMLERERDFTPVTASIVDRHVLTRGSQDKVVDNITRKDKEERPNLIILTPTCTSSILQEDLQNFVDRASIISDSDVILADVNHYRVNELQAADKTLEQVVRYYLGKARRRRTLDQSITDVPSANIIGISTLGFHNQHDFRELKRLLQDLGIKINQVIPEGSFVEDLENLPKAWFNFVPYREIGLMTAVYLEKEFGIPYVSVTPMGVVDTAKCIRQIQKHINNLAVVALEETVDYEPYVYQQTQFVSQAIWFSKSIDCQNLKKKKAVIFGDATHAASMTKILNREMGIRVSCAGTYCKHDKEWFNEQVHNFCDEVLITDDHAEVANKVARIEPSAIFGTQMERHIGKRLNIPCGVVSAPVHIQNFPLGYRPFSGYEGTNQIADSVYNSFIPGMEDHFIDLFGGHDTKEVIMKSLCTEKGVIWDPESQLELSKIPSFMRSKIKRKIDKFAVHNGFTKINIKIMYAALICL.

Asp-36 is a [4Fe-4S] cluster binding site. Asp-299 functions as the Proton donor in the catalytic mechanism. 434-435 contributes to the substrate binding site; the sequence is GM.

The protein belongs to the ChlB/BchB/BchZ family. In terms of assembly, protochlorophyllide reductase is composed of three subunits; ChlL, ChlN and ChlB. Forms a heterotetramer of two ChlB and two ChlN subunits. [4Fe-4S] cluster is required as a cofactor.

It is found in the plastid. It localises to the chloroplast. The catalysed reaction is chlorophyllide a + oxidized 2[4Fe-4S]-[ferredoxin] + 2 ADP + 2 phosphate = protochlorophyllide a + reduced 2[4Fe-4S]-[ferredoxin] + 2 ATP + 2 H2O. It participates in porphyrin-containing compound metabolism; chlorophyll biosynthesis (light-independent). Its function is as follows. Component of the dark-operative protochlorophyllide reductase (DPOR) that uses Mg-ATP and reduced ferredoxin to reduce ring D of protochlorophyllide (Pchlide) to form chlorophyllide a (Chlide). This reaction is light-independent. The NB-protein (ChlN-ChlB) is the catalytic component of the complex. In Huperzia lucidula (Shining clubmoss), this protein is Light-independent protochlorophyllide reductase subunit B.